We begin with the raw amino-acid sequence, 432 residues long: Vacuolar protein sorting-associated protein 38 (432 aa).

Residue Asn20 is glycosylated (N-linked (GlcNAc...) asparagine). Positions 216–287 (LDTYQENIKM…KEAIEKLQKK (72 aa)) form a coiled coil. A helical membrane pass occupies residues 348 to 365 (IINAMLGFYSLFIVIYSY).

The protein belongs to the VPS38 family. Component of the VPS34 PI3-kinase complex II composed of VPS15, VPS30, VPS34 and VPS38.

The protein localises to the golgi apparatus. The protein resides in the trans-Golgi network membrane. It is found in the endosome membrane. Functionally, involved in endosome-to-Golgi retrograde transport as part of the VPS34 PI3-kinase complex II. This complex is required for the endosome-to-Golgi retrieval of PEP1 and KEX2, and the recruitment of VPS5 and VPS7, two components of the retromer complex, to endosomal membranes (probably through generating a specific pool of phosphatidylinositol 3-phosphate allowing the recruitment of the retromer complex proteins to the endosome). Mediates the interaction between VPS30 and the VPS34-VPS15 core complex, leading to the recruitment of VPS30 to the membrane. This is Vacuolar protein sorting-associated protein 38 from Candida glabrata (strain ATCC 2001 / BCRC 20586 / JCM 3761 / NBRC 0622 / NRRL Y-65 / CBS 138) (Yeast).